We begin with the raw amino-acid sequence, 719 residues long: Photosystem I P700 chlorophyll a apoprotein A1 (719 aa).

Helical transmembrane passes span 59 to 82, 145 to 168, 184 to 208, 280 to 298, 335 to 358, 374 to 400, 422 to 444, and 520 to 538; these read IFGAHFGQLAIIFIWLSGMYFHGA, LYCTAVGALIFAGLMFFAGWFHYH, LNHHLAGLLGLGSLGWAGHQIHVSL, TAHHHLAIAVLFLVAGHMY, WHAQLAINLAMLGSLTIIVSHHMY, LSLFTHHMWIGGFLVVGAAAHAAIFMV, AIISHLNWVCIFLGFHSFGLYIH, and FLVHHIHAFTIHVTVLILL. Positions 562 and 571 each coordinate [4Fe-4S] cluster. Helical transmembrane passes span 578–599 and 653–675; these read HVFLGLFWMYNSISVVIFHFSW and LSAYGLLFLGAHFVWAFSLMFLF. Chlorophyll a' is bound at residue histidine 664. Chlorophyll a-binding residues include methionine 672 and tyrosine 680. Phylloquinone is bound at residue tryptophan 681. The helical transmembrane segment at 713 to 719 threads the bilayer; the sequence is AVGVTHT.

It belongs to the PsaA/PsaB family. In terms of assembly, the PsaA/B heterodimer binds the P700 chlorophyll special pair and subsequent electron acceptors. PSI consists of a core antenna complex that captures photons, and an electron transfer chain that converts photonic excitation into a charge separation. The eukaryotic PSI reaction center is composed of at least 11 subunits. P700 is a chlorophyll a/chlorophyll a' dimer, A0 is one or more chlorophyll a, A1 is one or both phylloquinones and FX is a shared 4Fe-4S iron-sulfur center. serves as cofactor.

The protein resides in the plastid. The protein localises to the chloroplast thylakoid membrane. It catalyses the reaction reduced [plastocyanin] + hnu + oxidized [2Fe-2S]-[ferredoxin] = oxidized [plastocyanin] + reduced [2Fe-2S]-[ferredoxin]. Functionally, psaA and PsaB bind P700, the primary electron donor of photosystem I (PSI), as well as the electron acceptors A0, A1 and FX. PSI is a plastocyanin-ferredoxin oxidoreductase, converting photonic excitation into a charge separation, which transfers an electron from the donor P700 chlorophyll pair to the spectroscopically characterized acceptors A0, A1, FX, FA and FB in turn. Oxidized P700 is reduced on the lumenal side of the thylakoid membrane by plastocyanin. The sequence is that of Photosystem I P700 chlorophyll a apoprotein A1 from Asplenium nidus (Bird's nest fern).